The following is a 345-amino-acid chain: Uroporphyrinogen decarboxylase (345 aa).

Substrate contacts are provided by residues 26–30, Phe-45, Asp-75, Tyr-151, Ser-206, and His-320; that span reads RQAGR.

This sequence belongs to the uroporphyrinogen decarboxylase family. Homodimer.

It localises to the cytoplasm. It catalyses the reaction uroporphyrinogen III + 4 H(+) = coproporphyrinogen III + 4 CO2. The protein operates within porphyrin-containing compound metabolism; protoporphyrin-IX biosynthesis; coproporphyrinogen-III from 5-aminolevulinate: step 4/4. Its function is as follows. Catalyzes the decarboxylation of four acetate groups of uroporphyrinogen-III to yield coproporphyrinogen-III. This chain is Uroporphyrinogen decarboxylase, found in Staphylococcus carnosus (strain TM300).